The chain runs to 80 residues: Putative membrane protein insertion efficiency factor (80 aa).

Residues 61–80 (KTGKDPVPDRFSLKRNQEGE) form a disordered region. Residues 62–80 (TGKDPVPDRFSLKRNQEGE) are compositionally biased toward basic and acidic residues.

Belongs to the UPF0161 family.

It localises to the cell membrane. In terms of biological role, could be involved in insertion of integral membrane proteins into the membrane. This is Putative membrane protein insertion efficiency factor from Streptococcus pneumoniae (strain P1031).